Consider the following 504-residue polypeptide: ATP synthase subunit alpha (504 aa).

169-176 (GDRKTGKT) lines the ATP pocket.

Belongs to the ATPase alpha/beta chains family. F-type ATPases have 2 components, CF(1) - the catalytic core - and CF(0) - the membrane proton channel. CF(1) has five subunits: alpha(3), beta(3), gamma(1), delta(1), epsilon(1). CF(0) has three main subunits: a(1), b(2) and c(9-12). The alpha and beta chains form an alternating ring which encloses part of the gamma chain. CF(1) is attached to CF(0) by a central stalk formed by the gamma and epsilon chains, while a peripheral stalk is formed by the delta and b chains.

It is found in the cell membrane. The enzyme catalyses ATP + H2O + 4 H(+)(in) = ADP + phosphate + 5 H(+)(out). Its function is as follows. Produces ATP from ADP in the presence of a proton gradient across the membrane. The alpha chain is a regulatory subunit. The sequence is that of ATP synthase subunit alpha from Leuconostoc citreum (strain KM20).